Here is a 427-residue protein sequence, read N- to C-terminus: Polyprenol-phosphate-mannose-dependent alpha-(1-2)-phosphatidylinositol mannoside mannosyltransferase (427 aa).

10 consecutive transmembrane segments (helical) span residues 18–38 (LWCL…WRLF), 101–121 (ASVA…AIVL), 143–163 (WLAV…SSNF), 191–211 (LMLG…LYFL), 218–238 (AALT…VLAW), 279–299 (ERFA…IWAM), 308–328 (PTLA…VSWS), 331–346 (WVWM…LLGW), 351–371 (VALA…PIDL), and 386–406 (LAGM…GLTV).

The protein belongs to the glycosyltransferase 87 family.

The protein localises to the cell membrane. The protein operates within phospholipid metabolism; phosphatidylinositol metabolism. Responsible for the addition of alpha-(1-2) mannose branches to the linear mannan core on the biosynthetic pathway to mature lipoarabinomannan (LAM). The protein is Polyprenol-phosphate-mannose-dependent alpha-(1-2)-phosphatidylinositol mannoside mannosyltransferase of Mycobacterium tuberculosis (strain ATCC 25618 / H37Rv).